We begin with the raw amino-acid sequence, 106 residues long: UPF0473 protein LSEI_0788 (106 aa).

It belongs to the UPF0473 family.

The protein is UPF0473 protein LSEI_0788 of Lacticaseibacillus paracasei (strain ATCC 334 / BCRC 17002 / CCUG 31169 / CIP 107868 / KCTC 3260 / NRRL B-441) (Lactobacillus paracasei).